Reading from the N-terminus, the 192-residue chain is Photosystem I assembly protein Ycf4 (192 aa).

The next 2 helical transmembrane spans lie at 30-52 and 72-94; these read YFWA…SSYL and IAIG…AIAW.

Belongs to the Ycf4 family.

It is found in the cellular thylakoid membrane. Its function is as follows. Seems to be required for the assembly of the photosystem I complex. The polypeptide is Photosystem I assembly protein Ycf4 (Thermosynechococcus vestitus (strain NIES-2133 / IAM M-273 / BP-1)).